The following is a 947-amino-acid chain: ATPase 10, plasma membrane-type (947 aa).

The Cytoplasmic portion of the chain corresponds to 1-69 (MAEDLDKPLL…EKQENRFVKF (69 aa)). A helical transmembrane segment spans residues 70–89 (LGFMWNPLSWVMEAAALMAI). Residues 90 to 101 (ALANSQSLGPDW) are Extracellular-facing. A helical membrane pass occupies residues 102 to 122 (EDFTGIVCLLLINATISFFEE). The Cytoplasmic segment spans residues 123–251 (NNAGNAAAAL…GHFQQVLTSI (129 aa)). Residues 252 to 272 (GNFCICSIAVGMVLEIIIMFP) form a helical membrane-spanning segment. Residues 273–281 (VQHRSYRIG) lie on the Extracellular side of the membrane. A helical transmembrane segment spans residues 282 to 299 (INNLLVLLIGGIPIAMPT). Residues 300–650 (VLSVTLAIGS…TSRAIFQRMR (351 aa)) are Cytoplasmic-facing. The 4-aspartylphosphate intermediate role is filled by D337. Mg(2+)-binding residues include D595 and D599. The chain crosses the membrane as a helical span at residues 651-672 (NYTVYAVSITIRIVLGFTLLAL). Topologically, residues 673-677 (IWEYD) are extracellular. Residues 678–700 (FPPFMVLIIAILNDGTIMTISKD) form a helical membrane-spanning segment. The Cytoplasmic segment spans residues 701–716 (RVRPSPTPESWKLNQI). The chain crosses the membrane as a helical span at residues 717–737 (FATGIVIGTYLALVTVLFYWI). At 738–758 (IVSTTFFEKHFHVKSIANNSE) the chain is on the extracellular side. A helical transmembrane segment spans residues 759–779 (QVSSAMYLQVSIISQALIFVT). Residues 780-791 (RSRGWSFFERPG) lie on the Cytoplasmic side of the membrane. A helical membrane pass occupies residues 792–812 (TLLIFAFILAQLAATLIAVYA). Over 813–820 (NISFAKIT) the chain is Extracellular. The chain crosses the membrane as a helical span at residues 821 to 841 (GIGWRWAGVIWLYSLIFYIPL). At 842–947 (DVIKFVFHYA…QRMIRAAHTV (106 aa)) the chain is on the cytoplasmic side. Phosphoserine is present on residues S897 and S929. The residue at position 946 (T946) is a Phosphothreonine.

This sequence belongs to the cation transport ATPase (P-type) (TC 3.A.3) family. Type IIIA subfamily. Found primarily in developing seeds. Expressed in guard cells, mesophyll cells, leaves and roots.

It is found in the membrane. It catalyses the reaction ATP + H2O + H(+)(in) = ADP + phosphate + 2 H(+)(out). Functionally, the plasma membrane H(+) ATPase of plants and fungi generates a proton gradient that drives the active transport of nutrients by H(+)-symport. The resulting external acidification and/or internal alkinization may mediate growth responses. In Arabidopsis thaliana (Mouse-ear cress), this protein is ATPase 10, plasma membrane-type (AHA10).